The chain runs to 379 residues: 1-deoxy-D-xylulose 5-phosphate reductoisomerase (379 aa).

Residues threonine 10, glycine 11, serine 12, isoleucine 13, asparagine 39, and asparagine 121 each coordinate NADPH. Lysine 122 provides a ligand contact to 1-deoxy-D-xylulose 5-phosphate. Glutamate 123 provides a ligand contact to NADPH. Residue aspartate 147 participates in Mn(2+) binding. 1-deoxy-D-xylulose 5-phosphate contacts are provided by serine 148, glutamate 149, serine 173, and histidine 196. Position 149 (glutamate 149) interacts with Mn(2+). Position 202 (glycine 202) interacts with NADPH. The 1-deoxy-D-xylulose 5-phosphate site is built by serine 209, asparagine 214, lysine 215, and glutamate 218. A Mn(2+)-binding site is contributed by glutamate 218.

It belongs to the DXR family. Mg(2+) serves as cofactor. Requires Mn(2+) as cofactor.

It catalyses the reaction 2-C-methyl-D-erythritol 4-phosphate + NADP(+) = 1-deoxy-D-xylulose 5-phosphate + NADPH + H(+). The protein operates within isoprenoid biosynthesis; isopentenyl diphosphate biosynthesis via DXP pathway; isopentenyl diphosphate from 1-deoxy-D-xylulose 5-phosphate: step 1/6. Functionally, catalyzes the NADPH-dependent rearrangement and reduction of 1-deoxy-D-xylulose-5-phosphate (DXP) to 2-C-methyl-D-erythritol 4-phosphate (MEP). In Chlamydia felis (strain Fe/C-56) (Chlamydophila felis), this protein is 1-deoxy-D-xylulose 5-phosphate reductoisomerase.